A 234-amino-acid polypeptide reads, in one-letter code: Uridylate kinase (234 aa).

Position 9–12 (9–12) interacts with ATP; it reads KLSG. G51 contacts UMP. G52 and R56 together coordinate ATP. UMP is bound by residues D71 and 132–139; that span reads CGNPFFTT. ATP-binding residues include T159, Y165, and D168.

Belongs to the UMP kinase family. As to quaternary structure, homohexamer.

Its subcellular location is the cytoplasm. It catalyses the reaction UMP + ATP = UDP + ADP. The protein operates within pyrimidine metabolism; CTP biosynthesis via de novo pathway; UDP from UMP (UMPK route): step 1/1. Inhibited by UTP. Its function is as follows. Catalyzes the reversible phosphorylation of UMP to UDP. The chain is Uridylate kinase from Prochlorococcus marinus (strain MIT 9312).